Here is a 512-residue protein sequence, read N- to C-terminus: Transactivator/viroplasmin protein (512 aa).

Disordered regions lie at residues 76 to 123 (GNER…NPVA) and 474 to 512 (ADSS…IPSI). The segment covering 476 to 487 (SSSTSGEQNNVE) has biased composition (polar residues). Over residues 499–512 (YDERSDDHKRIPSI) the composition is skewed to basic and acidic residues.

This sequence belongs to the caulimoviridae viroplasmin family.

It is found in the host cytoplasm. In terms of biological role, enhances the translation of downstream ORFs on polycistronic mRNAs derived from figwort mosaic virus. The protein is Transactivator/viroplasmin protein of Figwort mosaic virus (strain DxS) (FMV).